The primary structure comprises 334 residues: MSGFYHKHFLKLLDFTPAELNSLLQLAAKLKADKKSGKEEAKLTGKNIALIFEKDSTRTRCSFEVAAYDQGARVTYLGPSGSQIGHKESIKDTARVLGRMYDGIQYRGYGQEIVETLAEYAGVPVWNGLTNEFHPTQLLADLLTMQEHLPGKAFNEMTLVYAGDARNNMGNSMLEAAALTGLDLRLVAPQACWPEAALVTECRALAQQNGGNITLTEDVAKGVEGADFIYTDVWVSMGEAKEKWAERIALLRDYQVNSKMMQLTGNPEVKFLHCLPAFHDDQTTLGKKMAEEFGLHGGMEVTDEVFESAASIVFDQAENRMHTIKAVMVATLSK.

Carbamoyl phosphate-binding positions include 56–59 (STRT), Gln83, Arg107, and 134–137 (HPTQ). Residues Asn168, Asp232, and 236–237 (SM) each bind L-ornithine. Carbamoyl phosphate contacts are provided by residues 274 to 275 (CL) and Arg320.

The protein belongs to the aspartate/ornithine carbamoyltransferase superfamily. OTCase family.

It localises to the cytoplasm. The catalysed reaction is carbamoyl phosphate + L-ornithine = L-citrulline + phosphate + H(+). It participates in amino-acid biosynthesis; L-arginine biosynthesis; L-arginine from L-ornithine and carbamoyl phosphate: step 1/3. Functionally, reversibly catalyzes the transfer of the carbamoyl group from carbamoyl phosphate (CP) to the N(epsilon) atom of ornithine (ORN) to produce L-citrulline. In Escherichia coli (strain 55989 / EAEC), this protein is Ornithine carbamoyltransferase.